Reading from the N-terminus, the 341-residue chain is S-adenosylmethionine:tRNA ribosyltransferase-isomerase (341 aa).

Belongs to the QueA family. In terms of assembly, monomer.

The protein resides in the cytoplasm. It carries out the reaction 7-aminomethyl-7-carbaguanosine(34) in tRNA + S-adenosyl-L-methionine = epoxyqueuosine(34) in tRNA + adenine + L-methionine + 2 H(+). Its pathway is tRNA modification; tRNA-queuosine biosynthesis. Functionally, transfers and isomerizes the ribose moiety from AdoMet to the 7-aminomethyl group of 7-deazaguanine (preQ1-tRNA) to give epoxyqueuosine (oQ-tRNA). This chain is S-adenosylmethionine:tRNA ribosyltransferase-isomerase, found in Herminiimonas arsenicoxydans.